The primary structure comprises 508 residues: Amphoterin-induced protein 3 (508 aa).

The N-terminal stretch at 1-19 (MAWLVLLGLLLCMLGAGSG) is a signal peptide. The Extracellular portion of the chain corresponds to 20 to 383 (TSDLEGVLPP…PRPEPEAFNT (364 aa)). An LRRNT domain is found at 25–61 (GVLPPDPHNCPNKCVCAADVLSCAGRGLQDLPAALPA). Cystine bridges form between C34–C40 and C38–C47. 6 LRR repeats span residues 62–83 (TAAE…WLAP), 86–107 (RLRA…VFTN), 110–131 (GLRI…DLDG), 134–155 (ELEK…AFQG), 158–178 (MLSH…NHLH), and 184–207 (RLRT…AALP). The N-linked (GlcNAc...) asparagine glycan is linked to N107. Residues 219 to 275 (NPLPCDCSLYHLLRRWHQRGLSALHDFEREYTCLAFKVAESRVRFFEHSRVFKNCSV) form the LRRCT domain. 3 disulfides stabilise this stretch: C223–C251, C225–C273, and C300–C352. N-linked (GlcNAc...) asparagine glycosylation is found at N272, N301, N362, and N368. Residues 279–370 (PGLELPEEEL…HNQTLEYNVS (92 aa)) form the Ig-like C2-type domain. A helical transmembrane segment spans residues 384–404 (GFTTLLGCIVGLVLVLLYLFA). At 405-508 (PPCRGCCRCC…STGSEGLMMS (104 aa)) the chain is on the cytoplasmic side.

This sequence belongs to the immunoglobulin superfamily. AMIGO family. In terms of assembly, binds AMIGO1 or AMIGO2.

The protein resides in the membrane. In terms of biological role, may mediate heterophilic cell-cell interaction. May contribute to signal transduction through its intracellular domain. This Rattus norvegicus (Rat) protein is Amphoterin-induced protein 3.